A 211-amino-acid polypeptide reads, in one-letter code: MAVIAVIDYDMGNLHSACKGLENAGATPKITDSARDIEQADAIVLPGVGSFDPAVYHLRSRDLEAPLKDAIASGKPFLGICLGLQILFDASEEGSQPGLGIISGVVRRFRSEPGLTIPHMGWNQLEYTQANLPLWQELPFNPYVYFVHSYYVDPIDPSVRAATVTHGSQKVTAAIAKDNIMAVQFHPEKSSSNGLKILSNFVNQIRVKAIA.

Positions 3-211 constitute a Glutamine amidotransferase type-1 domain; that stretch reads VIAVIDYDMG…VNQIRVKAIA (209 aa). The active-site Nucleophile is the Cys81. Active-site residues include His186 and Glu188.

In terms of assembly, heterodimer of HisH and HisF.

It localises to the cytoplasm. The enzyme catalyses 5-[(5-phospho-1-deoxy-D-ribulos-1-ylimino)methylamino]-1-(5-phospho-beta-D-ribosyl)imidazole-4-carboxamide + L-glutamine = D-erythro-1-(imidazol-4-yl)glycerol 3-phosphate + 5-amino-1-(5-phospho-beta-D-ribosyl)imidazole-4-carboxamide + L-glutamate + H(+). It catalyses the reaction L-glutamine + H2O = L-glutamate + NH4(+). It participates in amino-acid biosynthesis; L-histidine biosynthesis; L-histidine from 5-phospho-alpha-D-ribose 1-diphosphate: step 5/9. Its function is as follows. IGPS catalyzes the conversion of PRFAR and glutamine to IGP, AICAR and glutamate. The HisH subunit catalyzes the hydrolysis of glutamine to glutamate and ammonia as part of the synthesis of IGP and AICAR. The resulting ammonia molecule is channeled to the active site of HisF. The chain is Imidazole glycerol phosphate synthase subunit HisH from Gloeothece citriformis (strain PCC 7424) (Cyanothece sp. (strain PCC 7424)).